Consider the following 354-residue polypeptide: Protein-glutamate methylesterase/protein-glutamine glutaminase 2 (354 aa).

The region spanning 5-122 (RVLIVDDSAL…SLKIKEVAEE (118 aa)) is the Response regulatory domain. Asp56 is modified (4-aspartylphosphate). The CheB-type methylesterase domain maps to 159 to 354 (PDTSFKKLIL…IADRIVELVR (196 aa)). Active-site residues include Ser172, His199, and Asp298.

Belongs to the CheB family. Phosphorylated by CheA. Phosphorylation of the N-terminal regulatory domain activates the methylesterase activity.

It is found in the cytoplasm. It catalyses the reaction [protein]-L-glutamate 5-O-methyl ester + H2O = L-glutamyl-[protein] + methanol + H(+). It carries out the reaction L-glutaminyl-[protein] + H2O = L-glutamyl-[protein] + NH4(+). In terms of biological role, involved in chemotaxis. Part of a chemotaxis signal transduction system that modulates chemotaxis in response to various stimuli. Catalyzes the demethylation of specific methylglutamate residues introduced into the chemoreceptors (methyl-accepting chemotaxis proteins or MCP) by CheR. Also mediates the irreversible deamidation of specific glutamine residues to glutamic acid. This Carboxydothermus hydrogenoformans (strain ATCC BAA-161 / DSM 6008 / Z-2901) protein is Protein-glutamate methylesterase/protein-glutamine glutaminase 2.